The primary structure comprises 1783 residues: MAKTGAEDHREALSQSSLSLLTEAMEVLQQSSPEGTLDGNTVNPIYKYILNDLPREFMSSQAKAVIKTTDDYLQSQFGPNRLVHSAAVSEGSGLQDCSTHQTASDHSHDEISDLDSYKSNSKNNSCSISASKRNRPVSAPVGQLRVAEFSSLKFQSARNWQKLSQRHKLQPRVIKVTAYKNGSRTVFARVTVPTITLLLEECTEKLNLNMAARRVFLADGKEALEPEDIPHEADVYVSTGEPFLNPFKKIKDHLLLIKKVTWTMNGLMLPTDIKRRKTKPVLSIRMKKLTERTSVRILFFKNGMGQDGHEITVGKETMKKVLDTCTIRMNLNLPARYFYDLYGRKIEDISKVPLLEKCLQNSITPLRGLLWVSKGEGFSPSGAKMYIQGVLLALYQRLKSAKKYYKQLNLVMNEQKEKITEKVILSMTAKEHHKEQEEVSRLIDELQTAIKSNIGHLCKLGPQLQAEQEQFSSYVYQHIKSLPANTLVPGGLQLKVFENGKNTGEISVGISKKDLGSDSPIQTDHMMERLLLKIHQRLQGSSINPPGLNYSSMRLFDENGQEIKNPLSLKNEQKIWVSYGRAYRSPLNLALGLTFDRVSAFARGDIMVAYKTFLDPNAVLLPGCGNWEVCEGFPINFNCTSQQIPDQFEKVDLENHFLQNKVDPNIVLHASVSIGKWSFSGSEASSRSQIAPSILWPVASVWLITKTGMILSRAITQGCLAIGHPIRVKAAEGTSLEGYKLILQKRHSGDDSQKWVFGTDGCIYSKAYPQFVLTYLEELNAQVDVTQTEYHIHHGAWTTAHQEHGRNLAEEVLQESASNLGLKQLPEPSDTHLMPEGSLEETGELTVALVRKLEEKHPKASAQRWAIKHEGTSKPGQWKHSRVENPLWNKLTYMWPVLPSGQLNEEFDWPIQGLLVPSSPPMKKPICKTTEPYAPVRLRVLQNGEKNKNRSVTILGPDISPGRKTQCTEILNLPSAARRLYNEKGKEIFALKDLQRDELVYVSCGELWINPDLSIAQQKKQIFLRNLESDIAKIQIFCSTHKIEALVLEVQSDIVSGSKLAVHKPVAIFGEEKQVTEPEEKQMQEDPLTTENASSEILDSHVRAHLRMKACHTLPRYAWQETSHDFDEDDSLPKKTEKGLFENVEPQKKHSCSPKHSKLHKHCHQQFEYRDGQIISHAAPQLVLGVQGPNLRSGMEVVLVEKKSDGSHQRWIHQEDSRTFHLVSNPDLVLAVSMTKTRNEVCGYPVIVQKYKPYNNGAANQKWHYMKNIKALVAFHSTALDKEITSANYAGVCTSSVIKEENIDQPGYCYLSPDGKRKTMLCLACGQSMRTEKGLKQLLPGVPFLCISGTKTQKPFLQGPFKVISVAEVDLSCDKAEKTLSYYQARLLSLRMKTCTQAASHSGMAATHQKAVKIIAYKNGDGYRNGKLIVAGTFPMLLTECTEQLGLARAASKVYTKDGTPIFTLRDLVLWALDESFLQRDSEKQKQDAAPVGKEQIIVEKNPRMKVKNRLFAKSVTSDSLDGIDKSLLTLILRNPIAIWVSCGEPFLPPNALQKAEKLEKQNWLKKDRILADLDTMRHKMRQLKGRRVAACQPATMVPTKSPVQPVVVEGGWTEQTQQEIKLMELIRHTEAHLSEIQEMESKINFPIATKRIAVKPSNLYKQPNTKRVWIYLNGGRPEDGTYAWGKTISELLQDCSSRLKMTHPARALYTPSGEPIQSWDDIERDMVICVSMGHGFKTPKELKQLMEIRANYARIRRQQGPQATDIVVSPSTKLLSLAHLHN.

Residues 93 to 133 (GLQDCSTHQTASDHSHDEISDLDSYKSNSKNNSCSISASKR) are disordered. A compositionally biased stretch (low complexity) spans 117–131 (YKSNSKNNSCSISAS). A Doublecortin 1 domain is found at 168–252 (KLQPRVIKVT…FLNPFKKIKD (85 aa)). The Ricin B-type lectin 1 domain occupies 702–800 (WLITKTGMIL…HIHHGAWTTA (99 aa)). The segment at 860-880 (ASAQRWAIKHEGTSKPGQWKH) is disordered. One can recognise a Doublecortin 2 domain in the interval 925-1015 (PICKTTEPYA…ELWINPDLSI (91 aa)). The region spanning 1151-1266 (SCSPKHSKLH…GAANQKWHYM (116 aa)) is the Ricin B-type lectin 2 domain.

As to quaternary structure, interacts with dynein intermediate chain, tubulin, RAB8A, RAB3IP, NUDC, PAFAH1B1 and DCTN1.

The protein resides in the midbody. Its subcellular location is the midbody ring. It localises to the cytoplasm. It is found in the cytoskeleton. The protein localises to the spindle. In terms of biological role, microtubule-binding protein which plays an important role in mediating dynein-dependent transport of RAB8A-positive vesicles to the midbody during cytokinesis. The protein is Doublecortin domain-containing protein 1 of Homo sapiens (Human).